Here is a 444-residue protein sequence, read N- to C-terminus: MIPLNTTDYANALGLKAKQASALMARAPTATKNAALRKLAGLLRANVNALQIDNARDIERAVQSGLAAPMVDRLKLSPQVIETCAQGCEQLAGMADVIGEIIGMKQQPSGIRVGQMRVPIGVFGMIFESRPNVTIEAASLSIKSGNACILRGGSEAIESNKALARLVQQALTESGLPAEAVQLVQTTDRAVVGQLITMPQYVDVIIPRGGKGLIERISRDAKVPVIKHLDGNCHTYVDDPCDIAMAVKVADNAKTNKYSPCNATESLLVARAVAAEFLPSIGRVYAAKGVEMRCDPQALAIFKENQPVAPVNIGHDAIDSAVELKPVLVLAQESDWFEEYLAPIISIKVVAGVDEAIAHINRYSSHHTDAILTRDHMHAQQFLREVDSASVMVNTSTRFADGFEYGLGAEIGISTDKFHARGPVGIEGLTSLKYVVLGDGEIRA.

Belongs to the gamma-glutamyl phosphate reductase family.

The protein localises to the cytoplasm. The catalysed reaction is L-glutamate 5-semialdehyde + phosphate + NADP(+) = L-glutamyl 5-phosphate + NADPH + H(+). It participates in amino-acid biosynthesis; L-proline biosynthesis; L-glutamate 5-semialdehyde from L-glutamate: step 2/2. Catalyzes the NADPH-dependent reduction of L-glutamate 5-phosphate into L-glutamate 5-semialdehyde and phosphate. The product spontaneously undergoes cyclization to form 1-pyrroline-5-carboxylate. The protein is Gamma-glutamyl phosphate reductase of Albidiferax ferrireducens (strain ATCC BAA-621 / DSM 15236 / T118) (Rhodoferax ferrireducens).